A 135-amino-acid chain; its full sequence is UPF0306 protein C8J_1355 (135 aa).

Belongs to the UPF0306 family.

The sequence is that of UPF0306 protein C8J_1355 from Campylobacter jejuni subsp. jejuni serotype O:6 (strain 81116 / NCTC 11828).